We begin with the raw amino-acid sequence, 452 residues long: tRNA modification GTPase MnmE (452 aa).

(6S)-5-formyl-5,6,7,8-tetrahydrofolate-binding residues include R24, E81, and K120. One can recognise a TrmE-type G domain in the interval 217 to 373 (GIKTAIVGKT…LIMKIEQMHI (157 aa)). N227 lines the K(+) pocket. Residues 227-232 (NVGKSS), 246-252 (TDIHGTT), and 271-274 (DTAG) each bind GTP. Position 231 (S231) interacts with Mg(2+). The K(+) site is built by T246, I248, and T251. A Mg(2+)-binding site is contributed by T252. Position 452 (K452) interacts with (6S)-5-formyl-5,6,7,8-tetrahydrofolate.

Belongs to the TRAFAC class TrmE-Era-EngA-EngB-Septin-like GTPase superfamily. TrmE GTPase family. As to quaternary structure, homodimer. Heterotetramer of two MnmE and two MnmG subunits. The cofactor is K(+).

It localises to the cytoplasm. In terms of biological role, exhibits a very high intrinsic GTPase hydrolysis rate. Involved in the addition of a carboxymethylaminomethyl (cmnm) group at the wobble position (U34) of certain tRNAs, forming tRNA-cmnm(5)s(2)U34. This Mesoplasma florum (strain ATCC 33453 / NBRC 100688 / NCTC 11704 / L1) (Acholeplasma florum) protein is tRNA modification GTPase MnmE.